The sequence spans 332 residues: Ubiquinol oxidase 1a, mitochondrial (332 aa).

A mitochondrion-targeting transit peptide spans methionine 1–methionine 54. A helical transmembrane segment spans residues alanine 157–leucine 177. Fe cation-binding residues include glutamate 161, glutamate 200, and histidine 203. The helical transmembrane segment at alanine 219–serine 239 threads the bilayer. The Fe cation site is built by glutamate 251, glutamate 302, and histidine 305.

The protein belongs to the alternative oxidase family. Homodimer; disulfide-linked. Fe cation is required as a cofactor. In terms of tissue distribution, expressed in roots, leaf sheaths and leaf blades.

It is found in the mitochondrion inner membrane. The catalysed reaction is 2 a ubiquinol + O2 = 2 a ubiquinone + 2 H2O. Functionally, catalyzes the cyanide-resistant oxidation of ubiquinol and the reduction of molecular oxygen to water, but does not translocate protons and consequently is not linked to oxidative phosphorylation. May increase respiration when the cytochrome respiratory pathway is restricted, or in response to low temperatures. The polypeptide is Ubiquinol oxidase 1a, mitochondrial (Oryza sativa subsp. japonica (Rice)).